Here is a 428-residue protein sequence, read N- to C-terminus: MEEVTSCSFSSPLFQQEDKRGVTYRIPALIYVPPAHTFLAFAEKRSSSKDEDALHLVLRRGLRTGQSVQWEPLKSLMKATLPGHRTMNPCPVWERKSGYVYLFFICVQGHVTERQQIMSGRNPARLCFICSQDAGYSWSDVRDLTEEVIGPEVTHWATFAVGPGHGIQLQSGRLIIPAYAYYIPFWFFCFRLPYRARPHSLMIYSDDLGATWHHGRLIKPMVTVECEVAEVIGKAGHPVLYCSARTPNRHRAEALSIDHGECFQKPVLSHQLCEPPHGCQGSVVSFCPLEIPGGCQDLAGEDAPAIQQSPLLCSSVRPEPEAGTLSESWLLYSHPTNKKRRVDLGIYLNQSPLEAACWSRPWILHCGPCGYSDLAALENEGLFGCLFECGTKQECEQIAFRLFTDREILSHVQGDCSTPGMNSEPSKK.

The FRIP motif signature appears at 24–27; sequence YRIP. The substrate site is built by R25 and R45. The active-site Proton acceptor is the D50. Residues 129-140 form a BNR 1 repeat; the sequence is ICSQDAGYSWSD. Substrate contacts are provided by Y179 and Y181. Residues 203-214 form a BNR 2 repeat; sequence IYSDDLGATWHH. E225 and R245 together coordinate substrate. The stretch at 254-265 is one BNR 3 repeat; sequence ALSIDHGECFQK. S314 carries the post-translational modification Phosphoserine. R341 is a binding site for substrate. Residue Y371 is the Nucleophile of the active site. The active site involves E388.

The protein belongs to the glycosyl hydrolase 33 family. As to quaternary structure, interacts with CAV1; this interaction enhances NEU3 sialidase activity within caveola. Interacts with EGFR; this interaction mediates desialylation of EGFR and enhances downstream signaling. In terms of processing, palmitoylated; may regulate intracellular trafficking and anchorage to plasma membrane and endomembranes. As to expression, expressed in brain.

The protein resides in the cell membrane. It is found in the membrane. The protein localises to the caveola. It localises to the early endosome membrane. Its subcellular location is the recycling endosome membrane. The protein resides in the lysosome membrane. The catalysed reaction is Hydrolysis of alpha-(2-&gt;3)-, alpha-(2-&gt;6)-, alpha-(2-&gt;8)- glycosidic linkages of terminal sialic acid residues in oligosaccharides, glycoproteins, glycolipids, colominic acid and synthetic substrates.. The enzyme catalyses a ganglioside GD1a + H2O = a ganglioside GM1 + N-acetylneuraminate. It catalyses the reaction a ganglioside GD1a (d18:1(4E)) + H2O = a ganglioside GM1 (d18:1(4E)) + N-acetylneuraminate. It carries out the reaction a ganglioside GD1b + H2O = a ganglioside GM1 + N-acetylneuraminate. The catalysed reaction is a ganglioside GD1b (d18:1(4E)) + H2O = a ganglioside GM1 (d18:1(4E)) + N-acetylneuraminate. The enzyme catalyses a ganglioside GD3 + H2O = a ganglioside GM3 + N-acetylneuraminate. It catalyses the reaction a ganglioside GD3 (d18:1(4E)) + H2O = a ganglioside GM3 (d18:1(4E)) + N-acetylneuraminate. It carries out the reaction a ganglioside GM3 + H2O = a beta-D-galactosyl-(1-&gt;4)-beta-D-glucosyl-(1&lt;-&gt;1)-ceramide + N-acetylneuraminate. The catalysed reaction is a ganglioside GM1 + H2O = a ganglioside GA1 + N-acetylneuraminate. The enzyme catalyses a ganglioside GM1 (d18:1(4E)) + H2O = a ganglioside GA1 (d18:1(4E)) + N-acetylneuraminate. It catalyses the reaction a ganglioside GM2 (d18:1(4E)) + H2O = a ganglioside GA2 (d18:1(4E)) + N-acetylneuraminate. It carries out the reaction a ganglioside GM3 (d18:1(4E)) + H2O = a beta-D-Gal-(1-&gt;4)-beta-D-Glc-(1&lt;-&gt;1)-Cer(d18:1(4E)) + N-acetylneuraminate. The catalysed reaction is a ganglioside GT1b + H2O = a ganglioside GD1b + N-acetylneuraminate. In terms of biological role, exo-alpha-sialidase that catalyzes the hydrolytic cleavage of the terminal sialic acid (N-acetylneuraminic acid, Neu5Ac) of a glycan moiety in the catabolism of glycolipids, glycoproteins and oligosacharides. Displays high catalytic efficiency for gangliosides including alpha-(2-&gt;3)-sialylated GD1a and GM3 and alpha-(2-&gt;8)-sialylated GD3. Plays a role in the regulation of transmembrane signaling through the modulation of ganglioside content of the lipid bilayer and by direct interaction with signaling receptors, such as EGFR. Desialylates EGFR and activates downstream signaling in proliferating cells. Contributes to clathrin-mediated endocytosis by regulating sorting of endocytosed receptors to early and recycling endosomes. The sequence is that of Sialidase-3 (NEU3) from Bos taurus (Bovine).